The chain runs to 189 residues: Elongation factor P (189 aa).

K35 carries the N6-(3,6-diaminohexanoyl)-5-hydroxylysine modification.

It belongs to the elongation factor P family. Post-translationally, may be beta-lysylated on the epsilon-amino group of Lys-35 by the combined action of EpmA and EpmB, and then hydroxylated on the C5 position of the same residue by EpmC (if this protein is present). Lysylation is critical for the stimulatory effect of EF-P on peptide-bond formation. The lysylation moiety may extend toward the peptidyltransferase center and stabilize the terminal 3-CCA end of the tRNA. Hydroxylation of the C5 position on Lys-35 may allow additional potential stabilizing hydrogen-bond interactions with the P-tRNA.

Its subcellular location is the cytoplasm. It functions in the pathway protein biosynthesis; polypeptide chain elongation. Involved in peptide bond synthesis. Alleviates ribosome stalling that occurs when 3 or more consecutive Pro residues or the sequence PPG is present in a protein, possibly by augmenting the peptidyl transferase activity of the ribosome. Modification of Lys-35 is required for alleviation. This chain is Elongation factor P, found in Wigglesworthia glossinidia brevipalpis.